We begin with the raw amino-acid sequence, 261 residues long: MTHQTHAYHMVNPSPWPLTGALSALLMTSGLIMWFHFNSTTLLMLGLTTNMLTMYQWWRDVVRESTFQGHHTPNVQKGLRYGMILFIISEVLFFTGFFWAFYHSSLAPTPELGGCWPPTGIHPLNPLEVPLLNTSVLLASGVSITWAHHSLMEGNRNHMLQALFITIALGVYFTLLQASEYYEAPFTISDGVYGSTFFVATGFHGLHVIIGSTFLIVCFFRQLKFHFTSNHHFGFEAAAWYWHFVDVVWLFLYVSIYWWGS.

Residues 1–15 (MTHQTHAYHMVNPSP) lie on the Mitochondrial matrix side of the membrane. Residues 16–34 (WPLTGALSALLMTSGLIMW) traverse the membrane as a helical segment. Residues 35-40 (FHFNST) lie on the Mitochondrial intermembrane side of the membrane. The chain crosses the membrane as a helical span at residues 41–66 (TLLMLGLTTNMLTMYQWWRDVVREST). Residues 67–72 (FQGHHT) are Mitochondrial matrix-facing. The helical transmembrane segment at 73–105 (PNVQKGLRYGMILFIISEVLFFTGFFWAFYHSS) threads the bilayer. The Mitochondrial intermembrane portion of the chain corresponds to 106 to 128 (LAPTPELGGCWPPTGIHPLNPLE). Residues 129–152 (VPLLNTSVLLASGVSITWAHHSLM) form a helical membrane-spanning segment. Residues 153–155 (EGN) are Mitochondrial matrix-facing. A helical membrane pass occupies residues 156-183 (RNHMLQALFITIALGVYFTLLQASEYYE). Residues 184–190 (APFTISD) are Mitochondrial intermembrane-facing. Residues 191–223 (GVYGSTFFVATGFHGLHVIIGSTFLIVCFFRQL) form a helical membrane-spanning segment. The Mitochondrial matrix segment spans residues 224-232 (KFHFTSNHH). A helical membrane pass occupies residues 233-256 (FGFEAAAWYWHFVDVVWLFLYVSI). Over 257–261 (YWWGS) the chain is Mitochondrial intermembrane.

It belongs to the cytochrome c oxidase subunit 3 family. Component of the cytochrome c oxidase (complex IV, CIV), a multisubunit enzyme composed of 14 subunits. The complex is composed of a catalytic core of 3 subunits MT-CO1, MT-CO2 and MT-CO3, encoded in the mitochondrial DNA, and 11 supernumerary subunits COX4I, COX5A, COX5B, COX6A, COX6B, COX6C, COX7A, COX7B, COX7C, COX8 and NDUFA4, which are encoded in the nuclear genome. The complex exists as a monomer or a dimer and forms supercomplexes (SCs) in the inner mitochondrial membrane with NADH-ubiquinone oxidoreductase (complex I, CI) and ubiquinol-cytochrome c oxidoreductase (cytochrome b-c1 complex, complex III, CIII), resulting in different assemblies (supercomplex SCI(1)III(2)IV(1) and megacomplex MCI(2)III(2)IV(2)).

It localises to the mitochondrion inner membrane. The enzyme catalyses 4 Fe(II)-[cytochrome c] + O2 + 8 H(+)(in) = 4 Fe(III)-[cytochrome c] + 2 H2O + 4 H(+)(out). In terms of biological role, component of the cytochrome c oxidase, the last enzyme in the mitochondrial electron transport chain which drives oxidative phosphorylation. The respiratory chain contains 3 multisubunit complexes succinate dehydrogenase (complex II, CII), ubiquinol-cytochrome c oxidoreductase (cytochrome b-c1 complex, complex III, CIII) and cytochrome c oxidase (complex IV, CIV), that cooperate to transfer electrons derived from NADH and succinate to molecular oxygen, creating an electrochemical gradient over the inner membrane that drives transmembrane transport and the ATP synthase. Cytochrome c oxidase is the component of the respiratory chain that catalyzes the reduction of oxygen to water. Electrons originating from reduced cytochrome c in the intermembrane space (IMS) are transferred via the dinuclear copper A center (CU(A)) of subunit 2 and heme A of subunit 1 to the active site in subunit 1, a binuclear center (BNC) formed by heme A3 and copper B (CU(B)). The BNC reduces molecular oxygen to 2 water molecules using 4 electrons from cytochrome c in the IMS and 4 protons from the mitochondrial matrix. This Gazella cuvieri (Cuvier's gazelle) protein is Cytochrome c oxidase subunit 3 (MT-CO3).